The sequence spans 288 residues: Elongation factor Ts (288 aa).

Residues 82–85 (TDFV) are involved in Mg(2+) ion dislocation from EF-Tu.

It belongs to the EF-Ts family.

The protein resides in the cytoplasm. In terms of biological role, associates with the EF-Tu.GDP complex and induces the exchange of GDP to GTP. It remains bound to the aminoacyl-tRNA.EF-Tu.GTP complex up to the GTP hydrolysis stage on the ribosome. In Chlorobium chlorochromatii (strain CaD3), this protein is Elongation factor Ts.